Reading from the N-terminus, the 637-residue chain is Biosynthetic arginine decarboxylase (637 aa).

Lysine 110 carries the post-translational modification N6-(pyridoxal phosphate)lysine. 290-300 (IDVGGGLGVDY) provides a ligand contact to substrate.

This sequence belongs to the Orn/Lys/Arg decarboxylase class-II family. SpeA subfamily. Mg(2+) is required as a cofactor. It depends on pyridoxal 5'-phosphate as a cofactor.

It catalyses the reaction L-arginine + H(+) = agmatine + CO2. In terms of biological role, catalyzes the biosynthesis of agmatine from arginine. The protein is Biosynthetic arginine decarboxylase of Pseudomonas putida (strain ATCC 47054 / DSM 6125 / CFBP 8728 / NCIMB 11950 / KT2440).